Reading from the N-terminus, the 311-residue chain is Methionyl-tRNA formyltransferase (311 aa).

(6S)-5,6,7,8-tetrahydrofolate is bound at residue 117-120; it reads SLLP.

It belongs to the Fmt family.

It catalyses the reaction L-methionyl-tRNA(fMet) + (6R)-10-formyltetrahydrofolate = N-formyl-L-methionyl-tRNA(fMet) + (6S)-5,6,7,8-tetrahydrofolate + H(+). Functionally, attaches a formyl group to the free amino group of methionyl-tRNA(fMet). The formyl group appears to play a dual role in the initiator identity of N-formylmethionyl-tRNA by promoting its recognition by IF2 and preventing the misappropriation of this tRNA by the elongation apparatus. The polypeptide is Methionyl-tRNA formyltransferase (Bordetella avium (strain 197N)).